Reading from the N-terminus, the 227-residue chain is 6-phosphogluconolactonase (227 aa).

Belongs to the glucosamine/galactosamine-6-phosphate isomerase family. 6-phosphogluconolactonase subfamily.

The enzyme catalyses 6-phospho-D-glucono-1,5-lactone + H2O = 6-phospho-D-gluconate + H(+). Its pathway is carbohydrate degradation; pentose phosphate pathway; D-ribulose 5-phosphate from D-glucose 6-phosphate (oxidative stage): step 2/3. Its function is as follows. Hydrolysis of 6-phosphogluconolactone to 6-phosphogluconate. The protein is 6-phosphogluconolactonase (pgl) of Helicobacter pylori (strain J99 / ATCC 700824) (Campylobacter pylori J99).